A 334-amino-acid polypeptide reads, in one-letter code: Leukocyte cell-derived chemotaxin 1 (334 aa).

Residues 45 to 65 (VVLISGAVLLLFGAIGAFYFW) traverse the membrane as a helical segment. One can recognise a BRICHOS domain in the interval 104–201 (GSGAEEAIAV…LCGDLPIFWL (98 aa)). A disulfide bond links cysteine 131 and cysteine 193. A propeptide spanning residues 211 to 214 (RERR) is cleaved from the precursor. The segment at 218 to 268 (RKIVPTTTKRPHSGPRSNPGAGRLNNETRPSVQEDSQAFNPDNPYHQQEGE) is disordered. Residues 242 to 257 (NNETRPSVQEDSQAFN) show a composition bias toward polar residues. N-linked (GlcNAc...) asparagine glycosylation occurs at asparagine 243. 4 disulfide bridges follow: cysteine 282–cysteine 286, cysteine 283–cysteine 323, cysteine 293–cysteine 317, and cysteine 297–cysteine 313.

The protein belongs to the chondromodulin-1 family. After cleavage, the post-translationally modified ChM-I is secreted as a glycoprotein. Detected in cartilage and cardiac valves (at protein level). Detected in the laminae fibrosa, spongiosa and ventricularis layers of normal cardiac valves (at protein level). Expression is decreased cardiac valves of patients with valvular heart disease (at protein level). Weakly expressed in chondrosarcoma.

The protein resides in the secreted. The protein localises to the extracellular space. It is found in the extracellular matrix. Its subcellular location is the endomembrane system. Functionally, bifunctional growth regulator that stimulates the growth of cultured chondrocytes in the presence of basic fibroblast growth factor (FGF) but inhibits the growth of cultured vascular endothelial cells. May contribute to the rapid growth of cartilage and vascular invasion prior to the replacement of cartilage by bone during endochondral bone development. Inhibits in vitro tube formation and mobilization of endothelial cells. Plays a role as antiangiogenic factor in cardiac valves to suppress neovascularization. This chain is Leukocyte cell-derived chemotaxin 1, found in Homo sapiens (Human).